Reading from the N-terminus, the 199-residue chain is Imidazole glycerol phosphate synthase subunit HisH (199 aa).

The Glutamine amidotransferase type-1 domain maps to 3 to 199 (NITIIDTGCA…LKNFVEKVPF (197 aa)). Cysteine 78 serves as the catalytic Nucleophile. Catalysis depends on residues histidine 178 and glutamate 180.

Heterodimer of HisH and HisF.

The protein resides in the cytoplasm. It carries out the reaction 5-[(5-phospho-1-deoxy-D-ribulos-1-ylimino)methylamino]-1-(5-phospho-beta-D-ribosyl)imidazole-4-carboxamide + L-glutamine = D-erythro-1-(imidazol-4-yl)glycerol 3-phosphate + 5-amino-1-(5-phospho-beta-D-ribosyl)imidazole-4-carboxamide + L-glutamate + H(+). The enzyme catalyses L-glutamine + H2O = L-glutamate + NH4(+). The protein operates within amino-acid biosynthesis; L-histidine biosynthesis; L-histidine from 5-phospho-alpha-D-ribose 1-diphosphate: step 5/9. IGPS catalyzes the conversion of PRFAR and glutamine to IGP, AICAR and glutamate. The HisH subunit catalyzes the hydrolysis of glutamine to glutamate and ammonia as part of the synthesis of IGP and AICAR. The resulting ammonia molecule is channeled to the active site of HisF. The sequence is that of Imidazole glycerol phosphate synthase subunit HisH from Haemophilus influenzae (strain 86-028NP).